Reading from the N-terminus, the 493-residue chain is Cyclin-dependent kinase-like 2 (493 aa).

One can recognise a Protein kinase domain in the interval 4-287 (YENLGLVGEG…CAELLHHDFF (284 aa)). Residues 10-18 (VGEGSYGMV) and Lys-33 contribute to the ATP site. Positions 45–51 (KKIAMRE) match the [NKR]KIAxRE motif. The Proton acceptor role is filled by Asp-126. Residues 363 to 384 (GEKAEKGNRASNASCLHDSRTS) form a disordered region.

The protein belongs to the protein kinase superfamily. CMGC Ser/Thr protein kinase family. CDC2/CDKX subfamily. In terms of tissue distribution, expressed in testis and kidney, and at lower level in brain and lung.

It is found in the cytoplasm. The protein localises to the nucleus. The enzyme catalyses L-seryl-[protein] + ATP = O-phospho-L-seryl-[protein] + ADP + H(+). It carries out the reaction L-threonyl-[protein] + ATP = O-phospho-L-threonyl-[protein] + ADP + H(+). The protein is Cyclin-dependent kinase-like 2 of Homo sapiens (Human).